The chain runs to 516 residues: Myocyte-specific enhancer factor 2A homolog (516 aa).

The interaction with hdac9 stretch occupies residues 1–100 (MGRKKIQITR…KGLNGCESPD (100 aa)). Residues 3–57 (RKKIQITRIMDERNRQVTFTKRKFGLMKKAYELSVLCDCEIALIIFNSSNKLFQY) form the MADS-box domain. The mef2-type DNA-binding region spans 58–86 (ASTDMDKVLLKYTEYNEPHESRTNSDIVE). Residues 318–339 (PSSKGMMPPLNTQRVTSSQGTQ) form a disordered region. Residues 327-339 (LNTQRVTSSQGTQ) are compositionally biased toward polar residues. At threonine 343 the chain carries Phosphothreonine; by NLK. At serine 386 the chain carries Phosphoserine; by NLK. The segment covering 420-433 (GSNLSINTNQNINI) has biased composition (polar residues). Residues 420 to 516 (GSNLSINTNQ…KRMRMDAWVT (97 aa)) form a disordered region. Positions 465–475 (DSLSSSSSSYD) are enriched in low complexity. 2 stretches are compositionally biased toward basic and acidic residues: residues 476–486 (GSDREDVRNDF) and 497–516 (NNED…AWVT).

Belongs to the MEF2 family. Interacts with hdac9 and nlk2. In terms of tissue distribution, restricted to the somitic mesoderm of early embryos. Expressed in the head region of neurula stage embryos and in body muscle (myotomes) of the tadpole. Expressed in all tissues examined in the adult.

Its subcellular location is the nucleus. Its function is as follows. May regulate muscle-specific transcription in the embryo and may regulate transcription of a variety of cell types in the adult. Binds to the sequence 5'-CTA[TA]4TAR-3'. Acts downstream of nlk2 in anterior neural development, including eye formation. The chain is Myocyte-specific enhancer factor 2A homolog (mef2a) from Xenopus laevis (African clawed frog).